The following is a 171-amino-acid chain: MGIVEKKEGGLERNRALFNSEGSCEGAKCGKEASMHTKHESEESFSGEKLTEAAARGRTEVVTELLELGTNPNAVNRFGRSAIQVMMMGNVRLAAILLQYGAEPNTPDPTTLTLPVHDAAREGFLDTLMLLHRAGARLDVRDSWGRLPVDLAEEQGHHLVVAYLREVVRDA.

The span at 33-42 (ASMHTKHESE) shows a compositional bias: basic and acidic residues. The interval 33 to 52 (ASMHTKHESEESFSGEKLTE) is disordered. ANK repeat units follow at residues 45 to 74 (FSGEKLTEAAARGRTEVVTELLELGTNPNA), 78 to 106 (FGRSAIQVMMMGNVRLAAILLQYGAEPNT), and 111 to 140 (TLTLPVHDAAREGFLDTLMLLHRAGARLDV).

Belongs to the CDKN2 cyclin-dependent kinase inhibitor family. Heterodimer with CDK4 or CDK6. Predominamt P16 complexes contained CDK6. Interacts with CDK4 (both 'T-172'-phosphorylated and non-phosphorylated forms); the interaction inhibits cyclin D-CDK4 kinase activity. Interacts with ISCO2. In terms of tissue distribution, expressed predominantly in lung and testis. In the testis, restricted to germ cells in the seminiferous epithelium. Not detected in premeiotic spermatogonia but high levels found in postmeiotic spermatids. In primary tumors, low levels detected in melanocytic hyperplasias. Higher levels found in non-metastatic and metastatic melanomas.

The protein localises to the cytoplasm. It localises to the nucleus. In terms of biological role, acts as a negative regulator of the proliferation of normal cells by interacting strongly with CDK4 and CDK6. This inhibits their ability to interact with cyclins D and to phosphorylate the retinoblastoma protein. The protein is Cyclin-dependent kinase inhibitor 2A of Monodelphis domestica (Gray short-tailed opossum).